Here is a 223-residue protein sequence, read N- to C-terminus: RNA-free ribonuclease P (223 aa).

The protein belongs to the HARP family.

The enzyme catalyses Endonucleolytic cleavage of RNA, removing 5'-extranucleotides from tRNA precursor.. Functionally, RNA-free RNase P that catalyzes the removal of the 5'-leader sequence from pre-tRNA to produce the mature 5'-terminus. This is RNA-free ribonuclease P from Methanococcus maripaludis (strain DSM 14266 / JCM 13030 / NBRC 101832 / S2 / LL).